A 314-amino-acid polypeptide reads, in one-letter code: Dihydroorotate dehydrogenase (fumarate) (314 aa).

Substrate is bound by residues Lys46, 70-74 (NSMGL), and Asn130. An FMN-binding site is contributed by 46-47 (KS). Asn130 lines the FMN pocket. Active-site nucleophile residues include Ser132 and Cys133. 2 residues coordinate FMN: Lys167 and Ile195. A substrate-binding site is contributed by 196 to 197 (NS). FMN contacts are provided by residues Gly224, 252-253 (GG), and 274-275 (GT).

It belongs to the dihydroorotate dehydrogenase family. Type 1 subfamily. Homodimer. FMN serves as cofactor.

Its subcellular location is the cytoplasm. It catalyses the reaction (S)-dihydroorotate + fumarate = orotate + succinate. It participates in pyrimidine metabolism; UMP biosynthesis via de novo pathway. Its function is as follows. Catalyzes the conversion of dihydroorotate to orotate with fumarate as the electron acceptor. This is Dihydroorotate dehydrogenase (fumarate) (URA1) from Saccharomyces paradoxus (Yeast).